The following is a 433-amino-acid chain: Tol-Pal system protein TolB (433 aa).

The N-terminal stretch at 1–21 (MIKRLRGLLVMLCCVAGMAVA) is a signal peptide.

The protein belongs to the TolB family. As to quaternary structure, the Tol-Pal system is composed of five core proteins: the inner membrane proteins TolA, TolQ and TolR, the periplasmic protein TolB and the outer membrane protein Pal. They form a network linking the inner and outer membranes and the peptidoglycan layer.

The protein resides in the periplasm. Part of the Tol-Pal system, which plays a role in outer membrane invagination during cell division and is important for maintaining outer membrane integrity. This chain is Tol-Pal system protein TolB, found in Pseudomonas putida (strain ATCC 47054 / DSM 6125 / CFBP 8728 / NCIMB 11950 / KT2440).